Reading from the N-terminus, the 500-residue chain is Hexokinase-3 (500 aa).

A helical transmembrane segment spans residues 4 to 24 (VGLGVAVGCAAVTCAIAAALV). A Hexokinase domain is found at 35 to 487 (RRAVALLREF…SGVGAALLAA (453 aa)). Residues 90-222 (SGSEEGVYYS…GLNVRVTALV (133 aa)) form a hexokinase small subdomain region. The ADP site is built by G104, T105, and N106. 4 residues coordinate D-glucose: T188, K189, N223, and D224. The hexokinase large subdomain stretch occupies residues 223 to 476 (NDTVGTLALG…RNVTLRVTED (254 aa)). S247 is a binding site for ADP. Positions 250, 278, and 309 each coordinate D-glucose. G441 lines the ADP pocket.

This sequence belongs to the hexokinase family. In terms of tissue distribution, expressed in roots, leaves, flowers, immature seeds and seed coat. Expressed in young shoots, tiller buds, endosperm seven days after fertilization, and interconnecting tissues such as pulvini and nodes.

It is found in the mitochondrion outer membrane. The catalysed reaction is a D-hexose + ATP = a D-hexose 6-phosphate + ADP + H(+). It carries out the reaction D-fructose + ATP = D-fructose 6-phosphate + ADP + H(+). It catalyses the reaction D-glucose + ATP = D-glucose 6-phosphate + ADP + H(+). It participates in carbohydrate metabolism; hexose metabolism. The protein operates within carbohydrate degradation; glycolysis; D-glyceraldehyde 3-phosphate and glycerone phosphate from D-glucose: step 1/4. In terms of biological role, fructose and glucose phosphorylating enzyme. Involved in the regulation of cell expansion in spikelet hulls, grain size, and gibberellin biosynthesis and homeostasis. The protein is Hexokinase-3 of Oryza sativa subsp. japonica (Rice).